We begin with the raw amino-acid sequence, 142 residues long: Dynein light chain Tctex-type protein 2B (142 aa).

This sequence belongs to the dynein light chain Tctex-type family. Light chain of the cytoplasmic dynein complex 2, a multisubunit complex composed at least of eleven different proteins. The cytoplasmic dynein 2 complex consists of two catalytic heavy chains (HCs) and a number of non-catalytic subunits presented by intermediate chains (ICs), light intermediate chains (LICs) and light chains (LCs). Among them, a heavy chain (DYNC2H1), two intermediate chains (DYNC2I2 and DYNC2I1), a light intermediate chain (DYNC2LI1), and a light chain (DYNLT2B) are unique to the dynein-2 complex, but a subset of the light chains are also shared by dynein-1 and dynein-2 complexes. Interacts with DYNC2I1. The dimer DYNLT2B-DYNLT1/DYNLT3 interacts with DYNC2I1; this interaction is crucial for retrograde trafficking of ciliary proteins.

Its subcellular location is the dynein axonemal particle. Acts as one of several non-catalytic accessory components of the cytoplasmic dynein 2 complex (dynein-2 complex), a motor protein complex that drives the movement of cargos along microtubules within cilia and flagella in concert with the intraflagellar transport (IFT) system. Required for proper retrograde ciliary transport. This chain is Dynein light chain Tctex-type protein 2B, found in Homo sapiens (Human).